Here is a 501-residue protein sequence, read N- to C-terminus: Solute carrier family 2, facilitated glucose transporter member 5 (501 aa).

At Met-1 the chain carries N-acetylmethionine. At 1 to 18 (MEQQDPIKKEGRLTPVLA) the chain is on the cytoplasmic side. Residues 19-39 (LATLIAAFGSSFQYGYNVAAV) traverse the membrane as a helical segment. Residue Tyr-32 participates in D-fructose binding. Residues 40-68 (NSPAELMKAFYNETHYSRFSEYISEFSLT) are Extracellular-facing. The N-linked (GlcNAc...) asparagine glycan is linked to Asn-51. A helical transmembrane segment spans residues 69–91 (LLWSISVSMFPFGGFVGSLMVGP). Residues 92–98 (LVNRLGR) lie on the Cytoplasmic side of the membrane. A helical membrane pass occupies residues 99-119 (KGTLLFNNIFSIVPAILMGTS). Topologically, residues 120–126 (KTARSYE) are extracellular. A helical membrane pass occupies residues 127–149 (MIILSRLLVGICAGLSSNVVPMY). Residues 150-161 (LGELSPKNLRGA) lie on the Cytoplasmic side of the membrane. A helical transmembrane segment spans residues 162-182 (LGVVPQLFITVGILVAQIVGL). Gln-167 serves as a coordination point for D-fructose. The Extracellular portion of the chain corresponds to 183 to 192 (RSLLATEEGW). A helical membrane pass occupies residues 193 to 213 (PILLGLTAIPAALQLLLLPFF). Over 214–277 (PESPRYLLIQ…MFRMRSLRWQ (64 aa)) the chain is Cytoplasmic. A helical transmembrane segment spans residues 278 to 298 (VISIIILMGGQQLSGVNAIYY). D-fructose contacts are provided by residues Gln-288 and 296-298 (IYY). Topologically, residues 299-313 (YADQIYLSAGVKDQD) are extracellular. Residues 314–334 (VQYVTVGTGAVNVLMTICAVF) traverse the membrane as a helical segment. At 335 to 342 (VVEYLGRR) the chain is on the cytoplasmic side. The chain crosses the membrane as a helical span at residues 343–363 (ALLLLGFSVCFIACCVLTVAL). Residues 364-371 (ALQDRVSW) are Extracellular-facing. Residues 372–394 (MPYISIVCVISYVIGHALGPSPI) form a helical membrane-spanning segment. Residue His-387 participates in D-fructose binding. The Cytoplasmic segment spans residues 395-412 (PALLITEVFLQSSRSAAY). A helical transmembrane segment spans residues 413-433 (MVGGTVHWLSNFAVGLVFPFI). 419 to 420 (HW) provides a ligand contact to D-fructose. Residues 434–439 (QVGLGA) are Extracellular-facing. A helical transmembrane segment spans residues 440 to 460 (YSFIIFAVICLLTTIYIFLIV). Topologically, residues 461–501 (PETKGKTFVEINHIFTKMNKVSDVHPAKDELKDIPLSAVEL) are cytoplasmic.

This sequence belongs to the major facilitator superfamily. Sugar transporter (TC 2.A.1.1) family. Glucose transporter subfamily.

The protein resides in the apical cell membrane. The protein localises to the cell membrane. Its subcellular location is the sarcolemma. It catalyses the reaction D-fructose(out) = D-fructose(in). Functions as a fructose transporter that has only low activity with other monosaccharides. Can mediate the uptake of deoxyglucose, but with low efficiency. Essential for fructose uptake in the small intestine. Plays a role in the regulation of salt uptake and blood pressure in response to dietary fructose. Required for the development of high blood pressure in response to high dietary fructose intake. This is Solute carrier family 2, facilitated glucose transporter member 5 from Equus caballus (Horse).